The primary structure comprises 210 residues: Imidazoleglycerol-phosphate dehydratase (210 aa).

Residues 1–23 (MNDSLLSNGHAPPLRQATVDRQT) are disordered.

Belongs to the imidazoleglycerol-phosphate dehydratase family.

It is found in the cytoplasm. It carries out the reaction D-erythro-1-(imidazol-4-yl)glycerol 3-phosphate = 3-(imidazol-4-yl)-2-oxopropyl phosphate + H2O. The protein operates within amino-acid biosynthesis; L-histidine biosynthesis; L-histidine from 5-phospho-alpha-D-ribose 1-diphosphate: step 6/9. The polypeptide is Imidazoleglycerol-phosphate dehydratase (Thermosynechococcus vestitus (strain NIES-2133 / IAM M-273 / BP-1)).